We begin with the raw amino-acid sequence, 297 residues long: 3-mercaptopyruvate sulfurtransferase (297 aa).

Position 2 is an N-acetylalanine (Ala-2). In terms of domain architecture, Rhodanese 1 spans 25–144 (ASQPLKLLDA…WLSQNLPISS (120 aa)). Ser-35 is subject to Phosphoserine. N6-acetyllysine; alternate is present on Lys-40. At Lys-40 the chain carries N6-succinyllysine; alternate. The tract at residues 145–160 (GKSPSEPAEFCAQLDP) is hinge. An N6-succinyllysine mark is found at Lys-146 and Lys-164. In terms of domain architecture, Rhodanese 2 spans 174–288 (DARRFQVVDA…WYMRAQPEHV (115 aa)). Arg-188 is a substrate binding site. Cys-248 (cysteine persulfide intermediate) is an active-site residue.

Monomer (active form). Homodimer; disulfide-linked (inactive form). In terms of processing, the N-terminus is blocked. In terms of tissue distribution, expressed in liver, heart, kidney and brain. Localizes to tubular epithelium in the kidney, pericentral hepatocytes in the liver, cardiac cells in the heart and neuroglial cells in the brain. Also expressed in vascular endothelium of the thoracic aorta. Weak expression in lung and thymus.

Its subcellular location is the cytoplasm. The protein localises to the mitochondrion. It localises to the synapse. It is found in the synaptosome. The catalysed reaction is 2-oxo-3-sulfanylpropanoate + [thioredoxin]-dithiol = [thioredoxin]-disulfide + hydrogen sulfide + pyruvate + H(+). Its activity is regulated as follows. By oxidative stress, and thioredoxin. Under oxidative stress conditions, the catalytic cysteine site is converted to a sulfenate which inhibits the MPST enzyme activity. Reduced thioredoxin cleaves an intersubunit disulfide bond to turn on the redox switch and reactivate the enzyme. Inhibited by different oxidants, hydrogen peroxide and tetrathionate. Transfer of a sulfur ion to cyanide or to other thiol compounds. Also has weak rhodanese activity. Detoxifies cyanide and is required for thiosulfate biosynthesis. Acts as an antioxidant. In combination with cysteine aminotransferase (CAT), contributes to the catabolism of cysteine and is an important producer of hydrogen sulfide in the brain, retina and vascular endothelial cells. Hydrogen sulfide H(2)S is an important synaptic modulator, signaling molecule, smooth muscle contractor and neuroprotectant. Its production by the 3MST/CAT pathway is regulated by calcium ions. The polypeptide is 3-mercaptopyruvate sulfurtransferase (Mpst) (Rattus norvegicus (Rat)).